We begin with the raw amino-acid sequence, 754 residues long: Leucine-rich repeat-containing protein 36 (754 aa).

2 LRR repeats span residues 51–72 (NLRS…QYLC) and 73–94 (SLQD…SRLQ). The 40-residue stretch at 107-146 (NPVVRKDTDYRLFAVYTLQTLEKLDDRTVREGERKAAKLH) folds into the LRRCT domain. The segment covering 241 to 255 (REMPSDNHQEDEFRH) has biased composition (basic and acidic residues). Residues 241-270 (REMPSDNHQEDEFRHYSPRQSTVRSPEKMT) form a disordered region. Residues 600-680 (NDMESLKQKL…EKTVAILHES (81 aa)) adopt a coiled-coil conformation. Residues 702–734 (YSGKALLPPEKGHHLGRSSPFGKSTLSSSSPVA) are disordered. Over residues 722–732 (FGKSTLSSSSP) the composition is skewed to polar residues.

The protein is Leucine-rich repeat-containing protein 36 (LRRC36) of Homo sapiens (Human).